Consider the following 269-residue polypeptide: Phosphate import ATP-binding protein PstB 2 (269 aa).

In terms of domain architecture, ABC transporter spans 23-264 (LHTEDLHVFY…PKIQATEDYV (242 aa)). 55–62 (GPSGCGKS) contributes to the ATP binding site.

This sequence belongs to the ABC transporter superfamily. Phosphate importer (TC 3.A.1.7) family. In terms of assembly, the complex is composed of two ATP-binding proteins (PstB), two transmembrane proteins (PstC and PstA) and a solute-binding protein (PstS).

Its subcellular location is the cell membrane. The enzyme catalyses phosphate(out) + ATP + H2O = ADP + 2 phosphate(in) + H(+). Functionally, part of the ABC transporter complex PstSACB involved in phosphate import. Responsible for energy coupling to the transport system. In Enterococcus faecalis (strain ATCC 700802 / V583), this protein is Phosphate import ATP-binding protein PstB 2.